Reading from the N-terminus, the 105-residue chain is Malonate decarboxylase acyl carrier protein (105 aa).

Ser-28 is subject to O-(phosphoribosyl dephospho-coenzyme A)serine.

This sequence belongs to the MdcC family. Covalently binds the prosthetic group of malonate decarboxylase.

It is found in the cytoplasm. In terms of biological role, subunit of malonate decarboxylase, it is an acyl carrier protein to which acetyl and malonyl thioester residues are bound via a 2'-(5''-phosphoribosyl)-3'-dephospho-CoA prosthetic group and turn over during the catalytic mechanism. The polypeptide is Malonate decarboxylase acyl carrier protein (Xanthomonas euvesicatoria pv. vesicatoria (strain 85-10) (Xanthomonas campestris pv. vesicatoria)).